A 328-amino-acid chain; its full sequence is Phosphate acyltransferase (328 aa).

It belongs to the PlsX family. In terms of assembly, homodimer. Probably interacts with PlsY.

It localises to the cytoplasm. It catalyses the reaction a fatty acyl-[ACP] + phosphate = an acyl phosphate + holo-[ACP]. Its pathway is lipid metabolism; phospholipid metabolism. Functionally, catalyzes the reversible formation of acyl-phosphate (acyl-PO(4)) from acyl-[acyl-carrier-protein] (acyl-ACP). This enzyme utilizes acyl-ACP as fatty acyl donor, but not acyl-CoA. This chain is Phosphate acyltransferase, found in Mycoplasma genitalium (strain ATCC 33530 / DSM 19775 / NCTC 10195 / G37) (Mycoplasmoides genitalium).